The following is a 521-amino-acid chain: Bifunctional purine biosynthesis protein PurH (521 aa).

The MGS-like domain occupies Met1–Val145.

Belongs to the PurH family.

The enzyme catalyses (6R)-10-formyltetrahydrofolate + 5-amino-1-(5-phospho-beta-D-ribosyl)imidazole-4-carboxamide = 5-formamido-1-(5-phospho-D-ribosyl)imidazole-4-carboxamide + (6S)-5,6,7,8-tetrahydrofolate. It carries out the reaction IMP + H2O = 5-formamido-1-(5-phospho-D-ribosyl)imidazole-4-carboxamide. The protein operates within purine metabolism; IMP biosynthesis via de novo pathway; 5-formamido-1-(5-phospho-D-ribosyl)imidazole-4-carboxamide from 5-amino-1-(5-phospho-D-ribosyl)imidazole-4-carboxamide (10-formyl THF route): step 1/1. It functions in the pathway purine metabolism; IMP biosynthesis via de novo pathway; IMP from 5-formamido-1-(5-phospho-D-ribosyl)imidazole-4-carboxamide: step 1/1. This is Bifunctional purine biosynthesis protein PurH from Burkholderia multivorans (strain ATCC 17616 / 249).